A 440-amino-acid chain; its full sequence is Serine protease inhibitor A3G (440 aa).

The segment at 357-382 (GTEAAAATGMAGVGCCAVFDFLEIFF) is RCL.

The protein belongs to the serpin family. Expressed in bone marrow (particularly hematopoietic stem cells), heart, kidney, liver, lung, skeletal muscle, spleen, testis, thymus and T-cells.

It localises to the cytoplasm. Its subcellular location is the nucleus. Serine and cysteine protease inhibitor. Can inhibit lysosomal papain-like proteases including the cathepsins B, G, H, K, L and V. Ineffective against elastase, granzyme A, granzyme B, or caspases 3, 8 or 9. Inhibition of cytoplasmic cathepsin B following release from the lysosome may protect cells from apoptosis. This may facilitate the survival of progenitor T-cells and the subsequent development of long term memory CD8 T-cells. The polypeptide is Serine protease inhibitor A3G (Serpina3g) (Mus musculus (Mouse)).